An 89-amino-acid polypeptide reads, in one-letter code: Cell division topological specificity factor (89 aa).

The protein belongs to the MinE family.

Its function is as follows. Prevents the cell division inhibition by proteins MinC and MinD at internal division sites while permitting inhibition at polar sites. This ensures cell division at the proper site by restricting the formation of a division septum at the midpoint of the long axis of the cell. The sequence is that of Cell division topological specificity factor from Clostridium beijerinckii (strain ATCC 51743 / NCIMB 8052) (Clostridium acetobutylicum).